Here is a 78-residue protein sequence, read N- to C-terminus: Large ribosomal subunit protein bL28 (78 aa).

The protein belongs to the bacterial ribosomal protein bL28 family.

The sequence is that of Large ribosomal subunit protein bL28 from Parasynechococcus marenigrum (strain WH8102).